Consider the following 407-residue polypeptide: Heparan-sulfate 6-O-sulfotransferase 1-B (407 aa).

The Cytoplasmic segment spans residues 8–14; it reads MVERTSK. Residues 15–35 form a helical; Signal-anchor for type II membrane protein membrane-spanning segment; the sequence is FLLIVVGSVFFMLILYQYVAP. Residues 36 to 407 are Lumenal-facing; it reads GVINFGSPHG…DYMNHIINGW (372 aa). 92–100 serves as a coordination point for 3'-phosphoadenylyl sulfate; the sequence is HIQKTGGTT. Residues 122–123, arginine 139, tryptophan 144, and histidine 149 contribute to the substrate site; that span reads KK. Histidine 149 acts as the Proton acceptor in catalysis. Residues arginine 183 and serine 191 each contribute to the 3'-phosphoadenylyl sulfate site. Substrate-binding residues include histidine 195 and tryptophan 202. Asparagine 262 is a glycosylation site (N-linked (GlcNAc...) asparagine). 315–317 is a 3'-phosphoadenylyl sulfate binding site; the sequence is MQY. Asparagine 318 carries N-linked (GlcNAc...) asparagine glycosylation. 321–322 is a 3'-phosphoadenylyl sulfate binding site; the sequence is RA. An N-linked (GlcNAc...) asparagine glycan is attached at asparagine 329.

Belongs to the sulfotransferase 6 family. In terms of tissue distribution, during early somitogenesis, first expressed in floor plate and somites. During mid-somitogenesis, expressed strongly in somites and more weakly in eye and hindbrain. During late somitogenesis, expressed in eye, hindbrain and posterior somites. At 24 hours post-fertilization (hpf), expressed in lens, forebrain, hindbrain, otic vesicle, anterior spinal cord neurons and posterior somites. At 36 hpf, expressed in the retinal ciliary marginal zone, brain, pancreas and weakly in pectoral fin. At 48 hpf, expressed in the retinal ciliary marginal zone, retinal ganglion cells, rhombomeres, otic vesicle and weakly in pectoral fin.

It is found in the membrane. It catalyses the reaction alpha-D-glucosaminyl-[heparan sulfate](n) + 3'-phosphoadenylyl sulfate = 6-sulfo-alpha-D-glucosaminyl-[heparan sulfate](n) + adenosine 3',5'-bisphosphate + H(+). 6-O-sulfation enzyme which catalyzes the transfer of sulfate from 3'-phosphoadenosine 5'-phosphosulfate (PAPS) to position 6 of the N-sulfoglucosamine residue (GlcNS) of heparan sulfate. The sequence is that of Heparan-sulfate 6-O-sulfotransferase 1-B from Danio rerio (Zebrafish).